Reading from the N-terminus, the 359-residue chain is Ornithine cyclodeaminase (359 aa).

Residues arginine 53 and lysine 77 each contribute to the L-ornithine site. NAD(+) is bound by residues threonine 92, arginine 120, 147-148 (AQ), aspartate 169, threonine 209, 232-235 (VGGD), lysine 239, and serine 300. Residue arginine 120 coordinates L-ornithine. Aspartate 235 is an L-ornithine binding site. Aspartate 235 acts as the Proton donor/acceptor in catalysis. Position 301 (valine 301) interacts with L-ornithine.

Belongs to the ornithine cyclodeaminase/mu-crystallin family. Requires NAD(+) as cofactor.

The catalysed reaction is L-ornithine = L-proline + NH4(+). The protein operates within amino-acid biosynthesis; L-proline biosynthesis; L-proline from L-ornithine: step 1/1. In terms of biological role, catalyzes the conversion of L-ornithine into L-proline with release of ammonia. The polypeptide is Ornithine cyclodeaminase (Brucella abortus biovar 1 (strain 9-941)).